Consider the following 360-residue polypeptide: NADP-dependent alcohol dehydrogenase 6 (360 aa).

Residue cysteine 46 coordinates Zn(2+). Positions 47 and 51 each coordinate NADP(+). Zn(2+) contacts are provided by histidine 68, cysteine 100, cysteine 103, cysteine 106, and cysteine 114. At serine 131 the chain carries Phosphoserine. Cysteine 163 serves as a coordination point for Zn(2+). Residues leucine 188, glycine 190, isoleucine 191, serine 210, arginine 211, lysine 215, cysteine 250, serine 252, threonine 255, aspartate 256, isoleucine 275, isoleucine 277, tyrosine 298, serine 299, leucine 301, and arginine 348 each coordinate NADP(+). Residue serine 359 is modified to Phosphoserine.

This sequence belongs to the zinc-containing alcohol dehydrogenase family. In terms of assembly, homodimer. Requires Zn(2+) as cofactor.

Its subcellular location is the cytoplasm. It is found in the nucleus. The catalysed reaction is a primary alcohol + NADP(+) = an aldehyde + NADPH + H(+). The enzyme catalyses (E)-cinnamyl alcohol + NADP(+) = (E)-cinnamaldehyde + NADPH + H(+). It catalyses the reaction hexan-1-ol + NADP(+) = hexanal + NADPH + H(+). It carries out the reaction 3-methylbutanol + NADP(+) = 3-methylbutanal + NADPH + H(+). The catalysed reaction is S-nitroso-CoA + NADPH + H(+) = sulfinamide-CoA + NADP(+). NADP-dependent, medium-chain alcohol dehydrogenase with a broad substrate specificity. Aldehydes exhibited 50-12000 times higher catalytic efficiency than the corresponding alcohols, therefore the major function of the enzyme is as an aldehyde reductase. The enzyme is active towards aromatic and aliphatic (linear and branched-chain) aldehydes. The enzyme is very active towards aromatic aldehydes, such as cinnamaldehyde, benzaldehyde and substituted benzaldehydes, such as veratraldehyde and panisaldehyde. It exhibits low activity towards substituted cinnamaldehydes, such as coniferaldehyde and sinapaldehyde. The enzyme has no activity with ketones, such as acetone or cyclohexanone. For the reverse reaction, linear and branched-chain primary alcohols are substrates, whereas very low activity is found with secondary alcohols, such as butan-2-ol. The enzyme may be physiologically involved in several steps of the lignin degradation pathway, initiated by other microorganisms, in the synthesis of fusel alcohols, products derived from the aminoacidic metabolism, and in the homeostasis of NADP(H). Has the ability to reduce 5-hydroxymethyl furfural (HMF), a furan derivative which is formed during the hydrolysis of lignocellulosic materials, to 5-hydroxymethylfurfuryl alcohol, thereby alleviating the inhibition of the fermentation of lignocellulose hydrolysates by HMF during fuel ethanol production. Also acts as an inhibitor of protein S-nitrosylation by mediating degradation of S-nitroso-coenzyme A (S-nitroso-CoA), a cofactor required to S-nitrosylate proteins. The sequence is that of NADP-dependent alcohol dehydrogenase 6 from Saccharomyces cerevisiae (strain ATCC 204508 / S288c) (Baker's yeast).